The following is a 527-amino-acid chain: UDP-glucuronosyltransferase 2A3 (527 aa).

A signal peptide spans 1-23 (MRSDKSALVFLLLQLFCVGCGFC). Residues 24–491 (GKVLVWPCDM…TWFQHYSIDV (468 aa)) lie on the Extracellular side of the membrane. N-linked (GlcNAc...) asparagine glycosylation is present at asparagine 313. A helical membrane pass occupies residues 492-512 (IGFLLACVATAIFLFTKCFLF). Topologically, residues 513 to 527 (SCQKFNKTRKIEKRE) are cytoplasmic.

The protein belongs to the UDP-glycosyltransferase family.

It localises to the membrane. The catalysed reaction is glucuronate acceptor + UDP-alpha-D-glucuronate = acceptor beta-D-glucuronoside + UDP + H(+). UDP-glucuronosyltransferases catalyze phase II biotransformation reactions in which lipophilic substrates are conjugated with glucuronic acid to increase water solubility and enhance excretion. They are of major importance in the conjugation and subsequent elimination of potentially toxic xenobiotics and endogenous compounds. The protein is UDP-glucuronosyltransferase 2A3 (UGT2A3) of Homo sapiens (Human).